The following is a 383-amino-acid chain: Acetylornithine deacetylase (383 aa).

H80 is a Zn(2+) binding site. Residue D82 is part of the active site. D112 lines the Zn(2+) pocket. Residue E144 is part of the active site. Zn(2+) is bound by residues E145, E169, and H355.

This sequence belongs to the peptidase M20A family. ArgE subfamily. In terms of assembly, homodimer. The cofactor is Zn(2+). Requires Co(2+) as cofactor. Glutathione is required as a cofactor.

The protein resides in the cytoplasm. It carries out the reaction N(2)-acetyl-L-ornithine + H2O = L-ornithine + acetate. The protein operates within amino-acid biosynthesis; L-arginine biosynthesis; L-ornithine from N(2)-acetyl-L-ornithine (linear): step 1/1. Its function is as follows. Catalyzes the hydrolysis of the amide bond of N(2)-acetylated L-amino acids. Cleaves the acetyl group from N-acetyl-L-ornithine to form L-ornithine, an intermediate in L-arginine biosynthesis pathway, and a branchpoint in the synthesis of polyamines. The polypeptide is Acetylornithine deacetylase (Edwardsiella ictaluri (strain 93-146)).